We begin with the raw amino-acid sequence, 357 residues long: Neutral protease 2 homolog UREG_02006 (357 aa).

A signal peptide spans 1–19; the sequence is MLFSSRFLALAALLGQALA. A propeptide spanning residues 20 to 179 is cleaved from the precursor; sequence LPIDDFSQSD…QSAVPTIEKR (160 aa). 2 cysteine pairs are disulfide-bonded: C187-C259 and C266-C284. H308 contributes to the Zn(2+) binding site. Residue E309 is part of the active site. Zn(2+) contacts are provided by H312 and D323.

This sequence belongs to the peptidase M35 family. Requires Zn(2+) as cofactor.

The protein localises to the secreted. The enzyme catalyses Preferential cleavage of bonds with hydrophobic residues in P1'. Also 3-Asn-|-Gln-4 and 8-Gly-|-Ser-9 bonds in insulin B chain.. Functionally, secreted metalloproteinase that allows assimilation of proteinaceous substrates. Shows high activities on basic nuclear substrates such as histone and protamine. The polypeptide is Neutral protease 2 homolog UREG_02006 (Uncinocarpus reesii (strain UAMH 1704)).